A 145-amino-acid polypeptide reads, in one-letter code: Large-conductance mechanosensitive channel (145 aa).

3 consecutive transmembrane segments (helical) span residues 14 to 34 (VMDL…VKSL), 38 to 58 (LIMP…YFLP), and 81 to 101 (GSFL…FLMV).

Belongs to the MscL family. Homopentamer.

It localises to the cell inner membrane. Its function is as follows. Channel that opens in response to stretch forces in the membrane lipid bilayer. May participate in the regulation of osmotic pressure changes within the cell. The protein is Large-conductance mechanosensitive channel of Rhizobium leguminosarum bv. trifolii (strain WSM2304).